The primary structure comprises 222 residues: Pyridoxine/pyridoxamine 5'-phosphate oxidase (222 aa).

Substrate is bound by residues 16–19 and Lys75; that span reads RVSY. FMN-binding positions include 70-75, 85-86, Lys92, and Gln114; these read RTVLCK and FT. The substrate site is built by Tyr132, Arg136, and Ser140. Residues 149-150 and Trp195 contribute to the FMN site; that span reads QS. A substrate-binding site is contributed by 201–203; the sequence is RLH. Arg205 is a binding site for FMN.

The protein belongs to the pyridoxamine 5'-phosphate oxidase family. As to quaternary structure, homodimer. It depends on FMN as a cofactor.

It carries out the reaction pyridoxamine 5'-phosphate + O2 + H2O = pyridoxal 5'-phosphate + H2O2 + NH4(+). The enzyme catalyses pyridoxine 5'-phosphate + O2 = pyridoxal 5'-phosphate + H2O2. Its pathway is cofactor metabolism; pyridoxal 5'-phosphate salvage; pyridoxal 5'-phosphate from pyridoxamine 5'-phosphate: step 1/1. The protein operates within cofactor metabolism; pyridoxal 5'-phosphate salvage; pyridoxal 5'-phosphate from pyridoxine 5'-phosphate: step 1/1. Its function is as follows. Catalyzes the oxidation of either pyridoxine 5'-phosphate (PNP) or pyridoxamine 5'-phosphate (PMP) into pyridoxal 5'-phosphate (PLP). The protein is Pyridoxine/pyridoxamine 5'-phosphate oxidase of Saccharopolyspora erythraea (strain ATCC 11635 / DSM 40517 / JCM 4748 / NBRC 13426 / NCIMB 8594 / NRRL 2338).